A 573-amino-acid polypeptide reads, in one-letter code: Ribosomal RNA-processing protein 9 (573 aa).

A disordered region spans residues 1-63 (MSDVTQQKKR…FEGENPADKR (63 aa)). Ser-2 is subject to N-acetylserine. The segment covering 25–58 (DEEITDPSSNEDEQLEVSDEEDALESEEEFEGEN) has biased composition (acidic residues). Residues 32–106 (SSNEDEQLEV…KERTIDEYNN (75 aa)) are a coiled coil. Residue Ser-50 is modified to Phosphoserine. WD repeat units follow at residues 234-273 (GHYD…PVKV), 278-317 (DRRG…QLEI), 320-359 (GHHD…RLTF), 397-435 (FCEG…PIFT), 471-509 (QPFW…RSFE), and 516-562 (GAKG…ARNG).

The protein belongs to the WD repeat RRP9 family. As to quaternary structure, interacts with UTP25. Component of the ribosomal small subunit (SSU) processome composed of at least 40 protein subunits and snoRNA U3.

The protein localises to the nucleus. It is found in the nucleolus. Involved in nucleolar processing of pre-18S ribosomal RNA. Required for efficient pre-rRNA cleavage at sites A0, A1 and A2, and biosynthesis of 18S rRNA. This is Ribosomal RNA-processing protein 9 (RRP9) from Saccharomyces cerevisiae (strain ATCC 204508 / S288c) (Baker's yeast).